The primary structure comprises 459 residues: Paired box protein Pax-8 (459 aa).

Positions 9-135 form a DNA-binding region, paired; sequence GHGGLNQLGG…SSINRIIRTK (127 aa). Residues 12–68 form a PAI subdomain region; it reads GLNQLGGAFVNGRPLPEVVRQRIVDLAHQGVRPCDISRQLRVSHGCVSKILGRYYET. The segment at 87–135 is RED subdomain; the sequence is KVVEKIGDYKRQNPTMFAWEIRDRLLAEGVCDNDTVPSVSSINRIIRTK. The span at 159–182 shows a compositional bias: polar residues; the sequence is LIPSSAVTPPESPQSDSLGSTYSI. A disordered region spans residues 159-223; it reads LIPSSAVTPP…QSSSSGPRKH (65 aa). Ser-305 carries the phosphoserine modification.

Interacts with WWTR1.

It localises to the nucleus. In terms of biological role, thought to encode a transcription factor. It may have a role in kidney cell differentiation. May play a regulatory role in mammalian development. The chain is Paired box protein Pax-8 (PAX8) from Canis lupus familiaris (Dog).